The chain runs to 218 residues: Phosphoenolpyruvate guanylyltransferase (218 aa).

Positions 151, 166, and 169 each coordinate phosphoenolpyruvate.

This sequence belongs to the CofC family.

The catalysed reaction is phosphoenolpyruvate + GTP + H(+) = enolpyruvoyl-2-diphospho-5'-guanosine + diphosphate. It functions in the pathway cofactor biosynthesis; coenzyme F420 biosynthesis. In terms of biological role, guanylyltransferase that catalyzes the activation of phosphoenolpyruvate (PEP) as enolpyruvoyl-2-diphospho-5'-guanosine, via the condensation of PEP with GTP. It is involved in the biosynthesis of coenzyme F420, a hydride carrier cofactor. This is Phosphoenolpyruvate guanylyltransferase from Mycobacterium sp. (strain KMS).